Reading from the N-terminus, the 206-residue chain is Dephospho-CoA kinase (206 aa).

Positions 6–206 (IIGLTGGIAS…KWKWKDWSKK (201 aa)) constitute a DPCK domain. Residue 14–19 (ASGKST) coordinates ATP.

It belongs to the CoaE family.

It is found in the cytoplasm. It carries out the reaction 3'-dephospho-CoA + ATP = ADP + CoA + H(+). It functions in the pathway cofactor biosynthesis; coenzyme A biosynthesis; CoA from (R)-pantothenate: step 5/5. In terms of biological role, catalyzes the phosphorylation of the 3'-hydroxyl group of dephosphocoenzyme A to form coenzyme A. The protein is Dephospho-CoA kinase of Carboxydothermus hydrogenoformans (strain ATCC BAA-161 / DSM 6008 / Z-2901).